We begin with the raw amino-acid sequence, 128 residues long: Large ribosomal subunit protein bL12 (128 aa).

It belongs to the bacterial ribosomal protein bL12 family. Homodimer. Part of the ribosomal stalk of the 50S ribosomal subunit. Forms a multimeric L10(L12)X complex, where L10 forms an elongated spine to which 2 to 4 L12 dimers bind in a sequential fashion. Binds GTP-bound translation factors.

Its function is as follows. Forms part of the ribosomal stalk which helps the ribosome interact with GTP-bound translation factors. Is thus essential for accurate translation. This is Large ribosomal subunit protein bL12 from Desulfovibrio desulfuricans (strain ATCC 27774 / DSM 6949 / MB).